A 150-amino-acid polypeptide reads, in one-letter code: D-aminoacyl-tRNA deacylase (150 aa).

A Gly-cisPro motif, important for rejection of L-amino acids motif is present at residues 138-139; sequence GP.

This sequence belongs to the DTD family. Homodimer.

It is found in the cytoplasm. It carries out the reaction glycyl-tRNA(Ala) + H2O = tRNA(Ala) + glycine + H(+). The catalysed reaction is a D-aminoacyl-tRNA + H2O = a tRNA + a D-alpha-amino acid + H(+). Functionally, an aminoacyl-tRNA editing enzyme that deacylates mischarged D-aminoacyl-tRNAs. Also deacylates mischarged glycyl-tRNA(Ala), protecting cells against glycine mischarging by AlaRS. Acts via tRNA-based rather than protein-based catalysis; rejects L-amino acids rather than detecting D-amino acids in the active site. By recycling D-aminoacyl-tRNA to D-amino acids and free tRNA molecules, this enzyme counteracts the toxicity associated with the formation of D-aminoacyl-tRNA entities in vivo and helps enforce protein L-homochirality. The polypeptide is D-aminoacyl-tRNA deacylase (Bacteroides fragilis (strain YCH46)).